A 99-amino-acid polypeptide reads, in one-letter code: Large ribosomal subunit protein uL23 (99 aa).

This sequence belongs to the universal ribosomal protein uL23 family. As to quaternary structure, part of the 50S ribosomal subunit. Contacts protein L29, and trigger factor when it is bound to the ribosome.

In terms of biological role, one of the early assembly proteins it binds 23S rRNA. One of the proteins that surrounds the polypeptide exit tunnel on the outside of the ribosome. Forms the main docking site for trigger factor binding to the ribosome. This chain is Large ribosomal subunit protein uL23, found in Pseudomonas fluorescens (strain SBW25).